The following is a 223-amino-acid chain: 3,4-dihydroxy-2-butanone 4-phosphate synthase (223 aa).

D-ribulose 5-phosphate contacts are provided by residues 39–40, Asp-44, 152–156, and Glu-176; these read RE and RRGHT. Mg(2+) is bound at residue Glu-40. His-155 contacts Mg(2+).

The protein belongs to the DHBP synthase family. In terms of assembly, homodimer. It depends on Mg(2+) as a cofactor. Mn(2+) is required as a cofactor.

The catalysed reaction is D-ribulose 5-phosphate = (2S)-2-hydroxy-3-oxobutyl phosphate + formate + H(+). Its pathway is cofactor biosynthesis; riboflavin biosynthesis; 2-hydroxy-3-oxobutyl phosphate from D-ribulose 5-phosphate: step 1/1. In terms of biological role, catalyzes the conversion of D-ribulose 5-phosphate to formate and 3,4-dihydroxy-2-butanone 4-phosphate. The sequence is that of 3,4-dihydroxy-2-butanone 4-phosphate synthase from Desulfovibrio desulfuricans (strain ATCC 27774 / DSM 6949 / MB).